The chain runs to 518 residues: Histone deacetylase 1 (518 aa).

Residues 22–333 are histone deacetylase; the sequence is RRVCYFYDAE…WCYETGVALG (312 aa). His153 acts as the Proton donor/acceptor in catalysis. Zn(2+) contacts are provided by Asp188, His190, and Asp276. Residues 387 to 518 are disordered; the sequence is HAPSVQFQER…QDQPSVHQKT (132 aa). A compositionally biased stretch (acidic residues) spans 401–412; the sequence is ELPEQDEDQEDP. Over residues 413 to 435 the composition is skewed to basic and acidic residues; the sequence is DERHHADSDVEMDDVKPLDDSGR. Positions 503–518 are enriched in polar residues; that stretch reads DNSNKLQDQPSVHQKT.

The protein belongs to the histone deacetylase family. HD Type 1 subfamily. Interacts with TPR3. The cofactor is Zn(2+). As to expression, expressed in roots and leaves.

It localises to the nucleus. The catalysed reaction is N(6)-acetyl-L-lysyl-[histone] + H2O = L-lysyl-[histone] + acetate. Responsible for the deacetylation of lysine residues on the N-terminal part of the core histones (H2A, H2B, H3 and H4). Histone deacetylation gives a tag for epigenetic repression and plays an important role in transcriptional regulation, cell cycle progression and developmental events. Histone deacetylases act via the formation of large multiprotein complexes. Negatively regulates the expression of the NAC48/NAC6 gene that controls root growth in seedlings. Epigenetically represses the expression of NAC48/NAC6 by deacetylating 'Lys-9' (H3K9ac), 'Lys-14' (H3K14ac) and 'Lys-18' (H3K18ac) of histone H3, and 'Lys-5' (H4K5ac), 'Lys-12' (H4K12ac) and 'Lys-16' (H4K16ac) of histone H4. Functions in the regulation of gene expression in the whole genome. Acts as a chromatin remodeling regulator to promote the formation of a repressive chromatin state. Functions with MODD via its interaction with TPR3, to down-regulates the histone acetylation level at BZIP46 target genes. BZIP46 is a positive regulator of abscisic acid (ABA) signaling and drought stress tolerance. In Oryza sativa subsp. japonica (Rice), this protein is Histone deacetylase 1.